Consider the following 981-residue polypeptide: Protein deadlock (981 aa).

A required for interaction with rhi/rhino region spans residues 1-60 (MEKLDKIRMSQKLSCWQHILTTLGTSSKTEQEWNTFFKGFLESWRKPYCIQTSCDPSIPL). Disordered regions lie at residues 72–195 (LQEN…ACAP), 274–307 (IMDK…DDQL), 327–352 (SRNE…NKKE), 375–446 (LRKS…PNNI), 554–586 (GLDD…ETLK), and 642–662 (LVHQ…TAAR). Composition is skewed to polar residues over residues 104–113 (PSKSHSTGST) and 150–160 (NHTTSIFSKAQ). Residues 167 to 191 (KLSSTKKRPDTCAPTDDSRKNREPR) are compositionally biased toward basic and acidic residues. A compositionally biased stretch (basic and acidic residues) spans 337–352 (EKVKLKGERPAQNKKE). Residues 377-390 (KSVKKSAKQQKPRV) show a composition bias toward basic residues. Positions 409-419 (TQDKQSTHEMI) are enriched in basic and acidic residues. Over residues 422–446 (QAKTISEASGQQTSQVQSSLSPNNI) the composition is skewed to polar residues. The segment covering 652–662 (RNQRDEATAAR) has biased composition (basic and acidic residues).

In terms of assembly, component of the Rhino-Deadlock-Cutoff (RDC) complex, composed of rhi/rhino, del/deadlock and cuff/cutoff. Interacts (via N-terminus) with rhi/rhino (via C-terminus); this interaction is direct. Interacts (via C-terminus) with cuff/cutoff; this interaction is direct.

It is found in the nucleus. The protein resides in the cytoplasm. It localises to the cytoskeleton. The protein localises to the microtubule organizing center. Its subcellular location is the centrosome. It is found in the chromosome. Its function is as follows. Developmental protein involved in oogenesis. Required for germline maintenance, stability of mitotic spindles, localization of patterning determinants, oocyte growth and fusome biogenesis in males and females. Also required for dorso-ventral and antero-posterior patterning of oocyte and eggshell. May be involved in microtubule function during oogenesis. Part of a rhi-dependent transcription machinery that enables the generation of piRNA precursors from heterochromatin while maintaining the suppression of transposon-encoded promoters and enhancers. Component of the RDC complex (rhi, del and cuff) which binds to repressive H3K9me3 marks in the piRNA clusters. RDC promotes the bidirectional transcription of piRNA clusters at these sites by interacting with Moonshiner which forms a complex with the transcription initiation factors TfIIA-S and Trf2. This mechanism allows transcription to occur in piRNA clusters despite the lack of proper promoter elements and in the presence of the repressive H3K9me3 mark. As part of the RDC complex, involved in suppression of splicing. This is Protein deadlock (del) from Drosophila melanogaster (Fruit fly).